A 672-amino-acid chain; its full sequence is Outer dynein arm-docking complex subunit 4 (672 aa).

8 TPR repeats span residues 13–46, 48–80, 81–114, 275–311, 320–353, 360–393, 397–430, and 437–470; these read FPSY…QDGD, NCLV…DPAF, CKGI…RPDR, LKSL…NKEE, GNLY…AKEY, SRAL…AKTT, TWLF…AEEE, and LNAS…AKLV. Basic and acidic residues predominate over residues 527–544; the sequence is RVRDEPEKVVKQWDHSED. Residues 527-672 form a disordered region; it reads RVRDEPEKVV…TGNEMEKEYE (146 aa). Residues 545 to 555 show a composition bias toward acidic residues; it reads EKETDEDDEAF. Composition is skewed to basic and acidic residues over residues 595 to 650 and 658 to 672; these read ETGR…EELG and GETK…KEYE.

As to quaternary structure, component of the outer dynein arm-docking complex along with ODAD1, ODAD2 and ODAD3. Interacts with ODAD1; this interaction may facilitate the recruitment and/or attachment of outer dynein arm docking complex proteins, including ODAD1, ODAD3 and ODAD2, to ciliary axonemes. Interacts with components of the IFT complex A, including IFT140, TTC21B/IFT139 and WDR19/IFT144, and the IFT complex B, including IFT46, IFT52 and IFT57. Interacts with CFAP53. As to expression, expressed in the nasal mucosa (at protein level).

It localises to the cytoplasm. The protein localises to the cytoskeleton. It is found in the cilium axoneme. In terms of biological role, component of the outer dynein arm-docking complex (ODA-DC) that mediates outer dynein arms (ODA) binding onto the doublet microtubule. Plays an essential role for the assembly of ODA-DC and for the docking of ODA in ciliary axoneme. This chain is Outer dynein arm-docking complex subunit 4, found in Homo sapiens (Human).